Here is a 458-residue protein sequence, read N- to C-terminus: Transmembrane protein 135 (458 aa).

Transmembrane regions (helical) follow at residues 68 to 88 (ILQS…FFCI), 96 to 116 (FYSW…AILI), 149 to 169 (TLRN…MFFF), 298 to 318 (FQLG…SCFL), 331 to 351 (IVAG…TISM), and 377 to 397 (ADTI…VMEV).

This sequence belongs to the TMEM135 family.

Its subcellular location is the mitochondrion membrane. The protein resides in the peroxisome membrane. Functionally, involved in mitochondrial metabolism by regulating the balance between mitochondrial fusion and fission. May act as a regulator of mitochondrial fission that promotes DNM1L-dependent fission through activation of DNM1L. May be involved in peroxisome organization. This is Transmembrane protein 135 from Mus musculus (Mouse).